A 95-amino-acid chain; its full sequence is Histone-like DNA-binding protein (95 aa).

This sequence belongs to the bacterial histone-like protein family.

In Rickettsia typhi (strain ATCC VR-144 / Wilmington), this protein is Histone-like DNA-binding protein.